A 382-amino-acid chain; its full sequence is Anhydro-N-acetylmuramic acid kinase (382 aa).

An ATP-binding site is contributed by 9–16 (GTSLDGID).

Belongs to the anhydro-N-acetylmuramic acid kinase family.

It catalyses the reaction 1,6-anhydro-N-acetyl-beta-muramate + ATP + H2O = N-acetyl-D-muramate 6-phosphate + ADP + H(+). It functions in the pathway amino-sugar metabolism; 1,6-anhydro-N-acetylmuramate degradation. Its pathway is cell wall biogenesis; peptidoglycan recycling. Its function is as follows. Catalyzes the specific phosphorylation of 1,6-anhydro-N-acetylmuramic acid (anhMurNAc) with the simultaneous cleavage of the 1,6-anhydro ring, generating MurNAc-6-P. Is required for the utilization of anhMurNAc either imported from the medium or derived from its own cell wall murein, and thus plays a role in cell wall recycling. In Bacillus anthracis (strain A0248), this protein is Anhydro-N-acetylmuramic acid kinase.